A 315-amino-acid chain; its full sequence is HPr kinase/phosphorylase (315 aa).

Catalysis depends on residues His140 and Lys161. 155–162 (GDSGVGKS) provides a ligand contact to ATP. Mg(2+) is bound at residue Ser162. Catalysis depends on Asp179, which acts as the Proton acceptor; for phosphorylation activity. Proton donor; for dephosphorylation activity. The important for the catalytic mechanism of both phosphorylation and dephosphorylation stretch occupies residues 203 to 212 (LEIRGIGIID). Glu204 is a binding site for Mg(2+). Arg245 is a catalytic residue. The interval 266–271 (PVKTGR) is important for the catalytic mechanism of dephosphorylation.

This sequence belongs to the HPrK/P family. As to quaternary structure, homohexamer. Mg(2+) serves as cofactor.

The enzyme catalyses [HPr protein]-L-serine + ATP = [HPr protein]-O-phospho-L-serine + ADP + H(+). It carries out the reaction [HPr protein]-O-phospho-L-serine + phosphate + H(+) = [HPr protein]-L-serine + diphosphate. Catalyzes the ATP- as well as the pyrophosphate-dependent phosphorylation of a specific serine residue in HPr, a phosphocarrier protein of the phosphoenolpyruvate-dependent sugar phosphotransferase system (PTS). HprK/P also catalyzes the pyrophosphate-producing, inorganic phosphate-dependent dephosphorylation (phosphorolysis) of seryl-phosphorylated HPr (P-Ser-HPr). The two antagonistic activities of HprK/P are regulated by several intracellular metabolites, which change their concentration in response to the absence or presence of rapidly metabolisable carbon sources (glucose, fructose, etc.) in the growth medium. Therefore, by controlling the phosphorylation state of HPr, HPrK/P is a sensor enzyme that plays a major role in the regulation of carbon metabolism and sugar transport: it mediates carbon catabolite repression (CCR), and regulates PTS-catalyzed carbohydrate uptake and inducer exclusion. The protein is HPr kinase/phosphorylase of Lactiplantibacillus plantarum (strain ATCC BAA-793 / NCIMB 8826 / WCFS1) (Lactobacillus plantarum).